Consider the following 409-residue polypeptide: Elongation factor Tu, chloroplastic (409 aa).

Residues 10–214 (KPHVNIGTIG…AVDAYIPTPE (205 aa)) form the tr-type G domain. The tract at residues 19–26 (GHVDHGKT) is G1. 19–26 (GHVDHGKT) contacts GTP. Position 26 (T26) interacts with Mg(2+). Positions 60-64 (GITIN) are G2. The interval 81–84 (DCPG) is G3. GTP-binding positions include 81-85 (DCPGH) and 136-139 (NKQD). The segment at 136–139 (NKQD) is G4. The G5 stretch occupies residues 174–176 (SAL).

It belongs to the TRAFAC class translation factor GTPase superfamily. Classic translation factor GTPase family. EF-Tu/EF-1A subfamily.

It localises to the plastid. The protein resides in the chloroplast. The enzyme catalyses GTP + H2O = GDP + phosphate + H(+). Functionally, GTP hydrolase that promotes the GTP-dependent binding of aminoacyl-tRNA to the A-site of ribosomes during protein biosynthesis. This Thalassiosira pseudonana (Marine diatom) protein is Elongation factor Tu, chloroplastic (tufA).